Consider the following 124-residue polypeptide: UPF0231 protein Shewmr4_0656 (124 aa).

The protein belongs to the UPF0231 family.

This Shewanella sp. (strain MR-4) protein is UPF0231 protein Shewmr4_0656.